We begin with the raw amino-acid sequence, 225 residues long: 7-cyano-7-deazaguanine synthase (225 aa).

Position 9–19 (9–19 (LSGGLDSATCL)) interacts with ATP. C189, C199, C202, and C205 together coordinate Zn(2+).

It belongs to the QueC family. Zn(2+) is required as a cofactor.

It catalyses the reaction 7-carboxy-7-deazaguanine + NH4(+) + ATP = 7-cyano-7-deazaguanine + ADP + phosphate + H2O + H(+). It participates in purine metabolism; 7-cyano-7-deazaguanine biosynthesis. In terms of biological role, catalyzes the ATP-dependent conversion of 7-carboxy-7-deazaguanine (CDG) to 7-cyano-7-deazaguanine (preQ(0)). This chain is 7-cyano-7-deazaguanine synthase, found in Dechloromonas aromatica (strain RCB).